We begin with the raw amino-acid sequence, 1615 residues long: DNA-directed RNA polymerase I subunit rpa1 (1615 aa).

Zn(2+)-binding residues include cysteine 65, cysteine 68, cysteine 75, and histidine 78. The segment at 155–181 is disordered; sequence GKSNEEGEEVMESDESDSDKMDTDENK. Residues 160–171 are compositionally biased toward acidic residues; sequence EGEEVMESDESD. A compositionally biased stretch (basic and acidic residues) spans 172 to 181; it reads SDKMDTDENK. Aspartate 593, aspartate 595, and aspartate 597 together coordinate Mg(2+). Positions 955-967 are bridging helix; it reads PQDYFFHCMAGRE. The span at 1305-1316 shows a compositional bias: acidic residues; sequence DSLTINDDDAPA. Residues 1305 to 1411 are disordered; it reads DSLTINDDDA…NSRSSNSFSD (107 aa). Over residues 1317 to 1336 the composition is skewed to low complexity; the sequence is NDDTTNNDENTSQQQPSSQN. Residues 1366 to 1399 show a composition bias toward acidic residues; it reads EDGEEEAEEKDSDEGESEAEESDDKSDVDSDSDE. Residues 1400 to 1411 show a composition bias toward low complexity; it reads ISNSRSSNSFSD.

Belongs to the RNA polymerase beta' chain family. In terms of assembly, component of the RNA polymerase I (Pol I) complex consisting of at least 13 subunits.

It localises to the nucleus. It carries out the reaction RNA(n) + a ribonucleoside 5'-triphosphate = RNA(n+1) + diphosphate. In terms of biological role, DNA-dependent RNA polymerase catalyzes the transcription of DNA into RNA using the four ribonucleoside triphosphates as substrates. Largest and catalytic core component of RNA polymerase I which synthesizes ribosomal RNA precursors. Forms the polymerase active center together with the second largest subunit. A single stranded DNA template strand of the promoter is positioned within the central active site cleft of Pol I. A bridging helix emanates from RPA1 and crosses the cleft near the catalytic site and is thought to promote translocation of Pol I by acting as a ratchet that moves the RNA-DNA hybrid through the active site by switching from straight to bent conformations at each step of nucleotide addition. In Dictyostelium discoideum (Social amoeba), this protein is DNA-directed RNA polymerase I subunit rpa1 (polr1a).